The following is a 206-amino-acid chain: Endoribonuclease YbeY (206 aa).

The tract at residues 1 to 20 is disordered; sequence MSQANHNDTHNNIDDNINNH. 3 residues coordinate Zn(2+): His168, His172, and His178.

The protein belongs to the endoribonuclease YbeY family. Zn(2+) serves as cofactor.

Its subcellular location is the cytoplasm. In terms of biological role, single strand-specific metallo-endoribonuclease involved in late-stage 70S ribosome quality control and in maturation of the 3' terminus of the 16S rRNA. In Psychrobacter arcticus (strain DSM 17307 / VKM B-2377 / 273-4), this protein is Endoribonuclease YbeY.